Consider the following 150-residue polypeptide: Ribonuclease K6 (150 aa).

Positions 1–23 are cleaved as a signal peptide; sequence MVLCFPLLLLLLVLWGPVCPLHA. H38 functions as the Proton acceptor in the catalytic mechanism. Cystine bridges form between C46-C104, C60-C114, C78-C129, and C85-C92. Substrate is bound by residues 61-65 and K86; that span reads KHQNT. N-linked (GlcNAc...) asparagine glycosylation is present at N100. R105 contributes to the substrate binding site. Catalysis depends on H145, which acts as the Proton donor.

Belongs to the pancreatic ribonuclease family. As to quaternary structure, interacts (via N-terminus) with bacterial lipopolysaccharide (LPS).

It localises to the secreted. The protein localises to the lysosome. The protein resides in the cytoplasmic granule. Ribonuclease which shows a preference for the pyrimidines uridine and cytosine. Has potent antibacterial activity against a range of Gram-positive and Gram-negative bacteria, including P.aeruginosa, A.baumanii, M.luteus, S.aureus, E.faecalis, E.faecium, S.saprophyticus and E.coli. Causes loss of bacterial membrane integrity, and also promotes agglutination of Gram-negative bacteria. Probably contributes to urinary tract sterility. Bactericidal activity is independent of RNase activity. This Pan troglodytes (Chimpanzee) protein is Ribonuclease K6 (RNASE6).